A 535-amino-acid polypeptide reads, in one-letter code: CTP synthase (535 aa).

An amidoligase domain region spans residues 1–267 (MTKFIFVTGG…DDIVIQRLQL (267 aa)). S13 lines the CTP pocket. Position 13 (S13) interacts with UTP. Residue 14–19 (SLGKGI) participates in ATP binding. Residue Y54 participates in L-glutamine binding. D71 serves as a coordination point for ATP. Mg(2+) contacts are provided by D71 and E141. Residues 148–150 (DIE), 188–193 (KTKPTQ), and K224 contribute to the CTP site. Residues 188-193 (KTKPTQ) and K224 contribute to the UTP site. 240-242 (RDA) is an ATP binding site. A Glutamine amidotransferase type-1 domain is found at 293–535 (TIGLVGKYVS…VEAALNYQQK (243 aa)). L-glutamine is bound at residue G355. Catalysis depends on C382, which acts as the Nucleophile; for glutamine hydrolysis. Residues 383–386 (LGMQ), E406, and R463 each bind L-glutamine. Residues H508 and E510 contribute to the active site.

This sequence belongs to the CTP synthase family. As to quaternary structure, homotetramer.

The enzyme catalyses UTP + L-glutamine + ATP + H2O = CTP + L-glutamate + ADP + phosphate + 2 H(+). It carries out the reaction L-glutamine + H2O = L-glutamate + NH4(+). The catalysed reaction is UTP + NH4(+) + ATP = CTP + ADP + phosphate + 2 H(+). It functions in the pathway pyrimidine metabolism; CTP biosynthesis via de novo pathway; CTP from UDP: step 2/2. Its activity is regulated as follows. Allosterically activated by GTP, when glutamine is the substrate; GTP has no effect on the reaction when ammonia is the substrate. The allosteric effector GTP functions by stabilizing the protein conformation that binds the tetrahedral intermediate(s) formed during glutamine hydrolysis. Inhibited by the product CTP, via allosteric rather than competitive inhibition. Its function is as follows. Catalyzes the ATP-dependent amination of UTP to CTP with either L-glutamine or ammonia as the source of nitrogen. Regulates intracellular CTP levels through interactions with the four ribonucleotide triphosphates. The polypeptide is CTP synthase (Staphylococcus epidermidis (strain ATCC 35984 / DSM 28319 / BCRC 17069 / CCUG 31568 / BM 3577 / RP62A)).